The chain runs to 419 residues: L-rhamnose isomerase (419 aa).

Mn(2+) contacts are provided by histidine 262, aspartate 294, and aspartate 296.

It belongs to the rhamnose isomerase family. In terms of assembly, homotetramer. The cofactor is Mn(2+).

It is found in the cytoplasm. It catalyses the reaction L-rhamnopyranose = L-rhamnulose. It functions in the pathway carbohydrate degradation; L-rhamnose degradation; glycerone phosphate from L-rhamnose: step 1/3. Functionally, catalyzes the interconversion of L-rhamnose and L-rhamnulose. The chain is L-rhamnose isomerase from Klebsiella pneumoniae (strain 342).